Consider the following 337-residue polypeptide: ATP-dependent 6-phosphofructokinase (337 aa).

Gly-11 contacts ATP. Arg-21–Arg-25 contacts ADP. Residues Arg-72 to Tyr-73 and Gly-102 to Ser-105 each bind ATP. Asp-103 serves as a coordination point for Mg(2+). Thr-125–Asp-127 contributes to the substrate binding site. Asp-127 (proton acceptor) is an active-site residue. Arg-154 is a binding site for ADP. Substrate-binding positions include Arg-162 and Met-169–Arg-171. ADP contacts are provided by residues Gly-185–Asp-187, Lys-212, and Lys-214–His-216. Residues Glu-223, Arg-245, and His-251–Arg-254 each bind substrate.

Belongs to the phosphofructokinase type A (PFKA) family. ATP-dependent PFK group I subfamily. Prokaryotic clade 'B1' sub-subfamily. As to quaternary structure, homotetramer. It depends on Mg(2+) as a cofactor.

It is found in the cytoplasm. The catalysed reaction is beta-D-fructose 6-phosphate + ATP = beta-D-fructose 1,6-bisphosphate + ADP + H(+). It participates in carbohydrate degradation; glycolysis; D-glyceraldehyde 3-phosphate and glycerone phosphate from D-glucose: step 3/4. Its activity is regulated as follows. Allosterically activated by ADP and other diphosphonucleosides, and allosterically inhibited by phosphoenolpyruvate. Its function is as follows. Catalyzes the phosphorylation of D-fructose 6-phosphate to fructose 1,6-bisphosphate by ATP, the first committing step of glycolysis. This Streptococcus pyogenes serotype M3 (strain SSI-1) protein is ATP-dependent 6-phosphofructokinase.